The primary structure comprises 197 residues: Putative double homeobox protein 3 (197 aa).

2 DNA-binding regions (homeobox) span residues 46-105 (GRRM…LRQH) and 121-180 (GRRK…WGQS). The disordered stretch occupies residues 102–127 (LRQHRRQSRPWPGRRDPQKGRRKRTA).

It belongs to the paired homeobox family. Expressed in hepatoma Hep3B cells.

The protein resides in the nucleus. The polypeptide is Putative double homeobox protein 3 (DUX3) (Homo sapiens (Human)).